The following is a 161-amino-acid chain: Regulator of ribonuclease activity A (161 aa).

It belongs to the RraA family. In terms of assembly, homotrimer. Binds to both RNA-binding sites in the C-terminal region of Rne and to RhlB.

Its subcellular location is the cytoplasm. Its function is as follows. Globally modulates RNA abundance by binding to RNase E (Rne) and regulating its endonucleolytic activity. Can modulate Rne action in a substrate-dependent manner by altering the composition of the degradosome. Modulates RNA-binding and helicase activities of the degradosome. The chain is Regulator of ribonuclease activity A from Klebsiella pneumoniae (strain 342).